We begin with the raw amino-acid sequence, 412 residues long: Putative gustatory receptor 58c (412 aa).

Helical transmembrane passes span 39 to 59 and 72 to 92; these read VVYCVILNVVYLLVLPFALFV and MFGVVYNVVALTKLLTMLFLM. N-linked (GlcNAc...) asparagine glycosylation occurs at Asn-158. A helical membrane pass occupies residues 173–193; it reads IVYALIMILLMSYVDMTVYMV. N-linked (GlcNAc...) asparagine glycosylation is present at Asn-203. The next 3 membrane-spanning stretches (helical) occupy residues 224 to 241, 262 to 282, and 296 to 316; these read IPREMGLMQILAAWRKLW, VLFNLLTTYIFSIAVLFRLWI, and ILYAIIFLTHHVEIVMQFSIF. N-linked (GlcNAc...) asparagine glycans are attached at residues Asn-337, Asn-386, and Asn-391.

This sequence belongs to the insect chemoreceptor superfamily. Gustatory receptor (GR) family. Gr10a subfamily.

The protein resides in the cell membrane. Its function is as follows. Probable gustatory receptor which mediates acceptance or avoidance behavior, depending on its substrates. The polypeptide is Putative gustatory receptor 58c (Gr58c) (Drosophila melanogaster (Fruit fly)).